The following is a 70-amino-acid chain: Small, acid-soluble spore protein 1 (70 aa).

Belongs to the alpha/beta-type SASP family.

Its function is as follows. SASP are bound to spore DNA. They are double-stranded DNA-binding proteins that cause DNA to change to an a-like conformation. They protect the DNA backbone from chemical and enzymatic cleavage and are thus involved in dormant spore's high resistance to UV light. This is Small, acid-soluble spore protein 1 from Bacillus subtilis.